The chain runs to 200 residues: MAKFIQHIGLVAPLDAANVDTDAIIPKQFLQKVTRTGFGQHLFNDWRFLDDASKVPNPDFVLNLPRYQGATILLARENFGCGSSREHAPWALTDFGFKVVIAPSFADIFYGNAFNNQLLPVTLSEADIDTLFQLVKENEGIEFVVDLEQQTVNAGGKSYAFEIDPFRRHCMINGLDSIGLTLQHEHNISAYEKQQPEFLR.

It belongs to the LeuD family. LeuD type 1 subfamily. In terms of assembly, heterodimer of LeuC and LeuD.

It carries out the reaction (2R,3S)-3-isopropylmalate = (2S)-2-isopropylmalate. It participates in amino-acid biosynthesis; L-leucine biosynthesis; L-leucine from 3-methyl-2-oxobutanoate: step 2/4. Its function is as follows. Catalyzes the isomerization between 2-isopropylmalate and 3-isopropylmalate, via the formation of 2-isopropylmaleate. This chain is 3-isopropylmalate dehydratase small subunit, found in Yersinia pestis bv. Antiqua (strain Antiqua).